Here is a 128-residue protein sequence, read N- to C-terminus: Large ribosomal subunit protein bL20 (128 aa).

The protein belongs to the bacterial ribosomal protein bL20 family.

In terms of biological role, binds directly to 23S ribosomal RNA and is necessary for the in vitro assembly process of the 50S ribosomal subunit. It is not involved in the protein synthesizing functions of that subunit. This chain is Large ribosomal subunit protein bL20, found in Micrococcus luteus (strain ATCC 4698 / DSM 20030 / JCM 1464 / CCM 169 / CCUG 5858 / IAM 1056 / NBRC 3333 / NCIMB 9278 / NCTC 2665 / VKM Ac-2230) (Micrococcus lysodeikticus).